The following is a 197-amino-acid chain: MACVTFREPISATVGKRMVFTGPAYVKDHLPQVAQHTAYIGEKRPALEKTGDLRYLWRPASNRSLPAKYKPEYVGEIGWGIPEYDFINKTRLQTGFHIKYEEFSQAAIDKLSHRYQSPWQPNPSIMDAEGSSSRGFIAWHMGDYEDTSQRNSKRAVLLRQSKAALPIGSRPPKLPKLPKKEEKSKFRPLHQHDARCY.

The interval 161–197 (SKAALPIGSRPPKLPKLPKKEEKSKFRPLHQHDARCY) is disordered. The segment covering 178–197 (PKKEEKSKFRPLHQHDARCY) has biased composition (basic and acidic residues).

In Bos taurus (Bovine), this protein is Protein SPMIP2 (SPMIP2).